The chain runs to 411 residues: UPF0261 protein SACE_5696 (411 aa).

Belongs to the UPF0261 family.

The sequence is that of UPF0261 protein SACE_5696 from Saccharopolyspora erythraea (strain ATCC 11635 / DSM 40517 / JCM 4748 / NBRC 13426 / NCIMB 8594 / NRRL 2338).